The chain runs to 152 residues: MEKDRNVKKRVITAGTFDILHPGHYEILKFAKSLGDELIVIIARDKTVERLKGRKPIIPENQRREMVEALKPVDKAILGSLNNKLEPILKLKPDIIVLGPDQMTFDEETLKKELEKHNLHPKIVRFKNYKKCPFHSSFDIVKEIVKRYCNKE.

Residues 16 to 17 (TF), 21 to 24 (HPGH), D101, and Y129 contribute to the ATP site.

Belongs to the archaeal FAD synthase family. In terms of assembly, homodimer. Requires a divalent metal cation as cofactor.

The enzyme catalyses FMN + ATP + H(+) = FAD + diphosphate. It functions in the pathway cofactor biosynthesis; FAD biosynthesis; FAD from FMN: step 1/1. Functionally, catalyzes the transfer of the AMP portion of ATP to flavin mononucleotide (FMN) to produce flavin adenine dinucleotide (FAD) coenzyme. This chain is FAD synthase, found in Methanocaldococcus vulcanius (strain ATCC 700851 / DSM 12094 / M7) (Methanococcus vulcanius).